The primary structure comprises 79 residues: Translation initiation factor IF-1, chloroplastic (79 aa).

The region spanning 1–74 is the S1-like domain; sequence MTRKNIDLIE…HRGRITFRLR (74 aa).

This sequence belongs to the IF-1 family. As to quaternary structure, component of the 30S ribosomal translation pre-initiation complex which assembles on the 30S ribosome in the order IF-2 and IF-3, IF-1 and N-formylmethionyl-tRNA(fMet); mRNA recruitment can occur at any time during PIC assembly.

The protein resides in the plastid. Its subcellular location is the chloroplast. Functionally, one of the essential components for the initiation of protein synthesis. Stabilizes the binding of IF-2 and IF-3 on the 30S subunit to which N-formylmethionyl-tRNA(fMet) subsequently binds. Helps modulate mRNA selection, yielding the 30S pre-initiation complex (PIC). Upon addition of the 50S ribosomal subunit IF-1, IF-2 and IF-3 are released leaving the mature 70S translation initiation complex. This chain is Translation initiation factor IF-1, chloroplastic, found in Chlorella vulgaris (Green alga).